The sequence spans 125 residues: uncharacterized protein (125 aa).

This is an uncharacterized protein from Saccharomyces cerevisiae (strain ATCC 204508 / S288c) (Baker's yeast).